Reading from the N-terminus, the 462-residue chain is Siroheme synthase (462 aa).

The segment at 1 to 203 (MQYFPIFVDT…GNNSKAEQMM (203 aa)) is precorrin-2 dehydrogenase /sirohydrochlorin ferrochelatase. Residues 22–23 (EV) and 43–44 (PW) each bind NAD(+). Serine 128 carries the post-translational modification Phosphoserine. A uroporphyrinogen-III C-methyltransferase region spans residues 217–462 (GEVYLVGAGP…EKLNWFGADA (246 aa)). Proline 226 contributes to the S-adenosyl-L-methionine binding site. Aspartate 249 (proton acceptor) is an active-site residue. Residue lysine 271 is the Proton donor of the active site. Residues 302–304 (GGD), isoleucine 307, 332–333 (TA), methionine 384, and alanine 413 contribute to the S-adenosyl-L-methionine site.

It in the N-terminal section; belongs to the precorrin-2 dehydrogenase / sirohydrochlorin ferrochelatase family. The protein in the C-terminal section; belongs to the precorrin methyltransferase family.

It carries out the reaction uroporphyrinogen III + 2 S-adenosyl-L-methionine = precorrin-2 + 2 S-adenosyl-L-homocysteine + H(+). The enzyme catalyses precorrin-2 + NAD(+) = sirohydrochlorin + NADH + 2 H(+). It catalyses the reaction siroheme + 2 H(+) = sirohydrochlorin + Fe(2+). It participates in cofactor biosynthesis; adenosylcobalamin biosynthesis; precorrin-2 from uroporphyrinogen III: step 1/1. The protein operates within cofactor biosynthesis; adenosylcobalamin biosynthesis; sirohydrochlorin from precorrin-2: step 1/1. Its pathway is porphyrin-containing compound metabolism; siroheme biosynthesis; precorrin-2 from uroporphyrinogen III: step 1/1. It functions in the pathway porphyrin-containing compound metabolism; siroheme biosynthesis; siroheme from sirohydrochlorin: step 1/1. It participates in porphyrin-containing compound metabolism; siroheme biosynthesis; sirohydrochlorin from precorrin-2: step 1/1. In terms of biological role, multifunctional enzyme that catalyzes the SAM-dependent methylations of uroporphyrinogen III at position C-2 and C-7 to form precorrin-2 via precorrin-1. Then it catalyzes the NAD-dependent ring dehydrogenation of precorrin-2 to yield sirohydrochlorin. Finally, it catalyzes the ferrochelation of sirohydrochlorin to yield siroheme. This Pseudoalteromonas atlantica (strain T6c / ATCC BAA-1087) protein is Siroheme synthase.